We begin with the raw amino-acid sequence, 340 residues long: Entry-fusion complex protein OPG094 (340 aa).

Positions 1 to 20 (MGGGVSVELPKRDPPPGVPT) are disordered. Residue Gly-2 is the site of N-myristoyl glycine; by host attachment. The Virion surface segment spans residues 2–319 (GGGVSVELPK…VQHNIKHSFD (318 aa)). A helical; Signal-anchor for type II membrane protein membrane pass occupies residues 320–340 (LKLHLISLLSLLVIWILIVAI).

It belongs to the orthopoxvirus OPG086 family. Interacts with OPG143. Component of the entry fusion complex (EFC) composed of OPG053, OPG076, OPG086, OPG094, OPG095, OPG099, OPG107, OPG143, OPG104, OPG147 and OPG155. Except for OPG095 and OPG053, each of the EFC proteins is required for assembly or stability of the complex. Post-translationally, unglycosylated because produced in viral factories instead of the classic ER -Golgi route.

The protein resides in the virion membrane. Component of the entry fusion complex (EFC), which consists of 11 proteins. During cell infection, this complex mediates entry of the virion core into the host cytoplasm by a two-step mechanism consisting of lipid mixing of the viral and cellular membranes and subsequent pore formation. The protein is Entry-fusion complex protein OPG094 (OPG094) of Cynomys gunnisoni (Gunnison's prairie dog).